A 286-amino-acid chain; its full sequence is 33 kDa chaperonin (286 aa).

2 cysteine pairs are disulfide-bonded: Cys-225–Cys-227 and Cys-258–Cys-261.

Belongs to the HSP33 family. In terms of processing, under oxidizing conditions two disulfide bonds are formed involving the reactive cysteines. Under reducing conditions zinc is bound to the reactive cysteines and the protein is inactive.

The protein resides in the cytoplasm. In terms of biological role, redox regulated molecular chaperone. Protects both thermally unfolding and oxidatively damaged proteins from irreversible aggregation. Plays an important role in the bacterial defense system toward oxidative stress. In Shewanella oneidensis (strain ATCC 700550 / JCM 31522 / CIP 106686 / LMG 19005 / NCIMB 14063 / MR-1), this protein is 33 kDa chaperonin.